Consider the following 470-residue polypeptide: Ribulose bisphosphate carboxylase large chain (470 aa).

Lysine 5 bears the N6,N6,N6-trimethyllysine mark. Substrate-binding residues include asparagine 114 and threonine 164. Lysine 166 (proton acceptor) is an active-site residue. Lysine 168 serves as a coordination point for substrate. Residues lysine 192, aspartate 194, and glutamate 195 each contribute to the Mg(2+) site. Lysine 192 carries the N6-carboxylysine modification. Histidine 285 serves as the catalytic Proton acceptor. Substrate is bound by residues arginine 286, histidine 318, and serine 370.

The protein belongs to the RuBisCO large chain family. Type I subfamily. In terms of assembly, heterohexadecamer of 8 large chains and 8 small chains; disulfide-linked. The disulfide link is formed within the large subunit homodimers. The cofactor is Mg(2+). Post-translationally, the disulfide bond which can form in the large chain dimeric partners within the hexadecamer appears to be associated with oxidative stress and protein turnover.

The protein localises to the plastid. Its subcellular location is the chloroplast. The enzyme catalyses 2 (2R)-3-phosphoglycerate + 2 H(+) = D-ribulose 1,5-bisphosphate + CO2 + H2O. It carries out the reaction D-ribulose 1,5-bisphosphate + O2 = 2-phosphoglycolate + (2R)-3-phosphoglycerate + 2 H(+). RuBisCO catalyzes two reactions: the carboxylation of D-ribulose 1,5-bisphosphate, the primary event in carbon dioxide fixation, as well as the oxidative fragmentation of the pentose substrate in the photorespiration process. Both reactions occur simultaneously and in competition at the same active site. The protein is Ribulose bisphosphate carboxylase large chain of Kigelia africana (Sausage tree).